A 338-amino-acid chain; its full sequence is Peroxidase 15 (338 aa).

A signal peptide spans 1–22 (MARIGSFLIILYLIYALTLCIC). 4 disulfides stabilise this stretch: cysteine 45–cysteine 125, cysteine 78–cysteine 83, cysteine 131–cysteine 332, and cysteine 210–cysteine 242. Histidine 76 acts as the Proton acceptor in catalysis. Ca(2+)-binding residues include aspartate 77, valine 80, glycine 82, aspartate 84, and serine 86. Substrate is bound at residue proline 173. Asparagine 176 carries an N-linked (GlcNAc...) asparagine glycan. Position 203 (histidine 203) interacts with heme b. A Ca(2+)-binding site is contributed by threonine 204. 2 N-linked (GlcNAc...) asparagine glycosylation sites follow: asparagine 219 and asparagine 250. Residues aspartate 255, serine 258, and aspartate 263 each contribute to the Ca(2+) site.

The protein belongs to the peroxidase family. Classical plant (class III) peroxidase subfamily. Requires heme b as cofactor. Ca(2+) is required as a cofactor.

It localises to the secreted. The catalysed reaction is 2 a phenolic donor + H2O2 = 2 a phenolic radical donor + 2 H2O. In terms of biological role, removal of H(2)O(2), oxidation of toxic reductants, biosynthesis and degradation of lignin, suberization, auxin catabolism, response to environmental stresses such as wounding, pathogen attack and oxidative stress. These functions might be dependent on each isozyme/isoform in each plant tissue. This chain is Peroxidase 15 (PER15), found in Arabidopsis thaliana (Mouse-ear cress).